The following is a 568-amino-acid chain: Sulfite reductase [NADPH] hemoprotein beta-component (568 aa).

[4Fe-4S] cluster contacts are provided by Cys-426, Cys-432, Cys-471, and Cys-475. Position 475 (Cys-475) interacts with siroheme.

It belongs to the nitrite and sulfite reductase 4Fe-4S domain family. As to quaternary structure, alpha(8)-beta(8). The alpha component is a flavoprotein, the beta component is a hemoprotein. Siroheme is required as a cofactor. The cofactor is [4Fe-4S] cluster.

It catalyses the reaction hydrogen sulfide + 3 NADP(+) + 3 H2O = sulfite + 3 NADPH + 4 H(+). Its pathway is sulfur metabolism; hydrogen sulfide biosynthesis; hydrogen sulfide from sulfite (NADPH route): step 1/1. Component of the sulfite reductase complex that catalyzes the 6-electron reduction of sulfite to sulfide. This is one of several activities required for the biosynthesis of L-cysteine from sulfate. The protein is Sulfite reductase [NADPH] hemoprotein beta-component of Xylella fastidiosa (strain M23).